A 265-amino-acid chain; its full sequence is Methyl-coenzyme M reductase II subunit gamma (265 aa).

A coenzyme M-binding site is contributed by Arg-123.

It belongs to the methyl-coenzyme M reductase gamma subunit family. MCR is a hexamer of two alpha, two beta, and two gamma chains, forming a dimer of heterotrimers. It depends on coenzyme F430 as a cofactor.

The enzyme catalyses coenzyme B + methyl-coenzyme M = methane + coenzyme M-coenzyme B heterodisulfide. It participates in one-carbon metabolism; methyl-coenzyme M reduction; methane from methyl-coenzyme M: step 1/1. Its function is as follows. Component of the methyl-coenzyme M reductase (MCR) I that catalyzes the reductive cleavage of methyl-coenzyme M (CoM-S-CH3 or 2-(methylthio)ethanesulfonate) using coenzyme B (CoB or 7-mercaptoheptanoylthreonine phosphate) as reductant which results in the production of methane and the mixed heterodisulfide of CoB and CoM (CoM-S-S-CoB). This is the final step in methanogenesis. This Methanothermobacter marburgensis (strain ATCC BAA-927 / DSM 2133 / JCM 14651 / NBRC 100331 / OCM 82 / Marburg) (Methanobacterium thermoautotrophicum) protein is Methyl-coenzyme M reductase II subunit gamma (mrtG).